A 155-amino-acid chain; its full sequence is RNA pyrophosphohydrolase (155 aa).

Residues 5-147 (KYRPNVAAII…KRQVYRQVIA (143 aa)) enclose the Nudix hydrolase domain. The short motif at 42–63 (GGIDEGETPLEALYRELLEEIG) is the Nudix box element.

Belongs to the Nudix hydrolase family. RppH subfamily. A divalent metal cation serves as cofactor.

Its function is as follows. Accelerates the degradation of transcripts by removing pyrophosphate from the 5'-end of triphosphorylated RNA, leading to a more labile monophosphorylated state that can stimulate subsequent ribonuclease cleavage. This Helicobacter pylori (strain P12) protein is RNA pyrophosphohydrolase.